A 594-amino-acid chain; its full sequence is Spermidine/putrescine import ATP-binding protein PotA (594 aa).

Positions 24 to 435 constitute an ABC transporter domain; that stretch reads IEIKKINKTY…PANNWVANFI (412 aa). 57-64 lines the ATP pocket; the sequence is GPSGCGKT. Residues 125–304 form an insert region; sequence RKPIENVSAD…EWFDKKKLTR (180 aa).

Belongs to the ABC transporter superfamily. Spermidine/putrescine importer (TC 3.A.1.11.1) family. In terms of assembly, the complex is composed of two ATP-binding proteins (PotA), two transmembrane proteins (PotB and PotC) and a solute-binding protein (PotD).

Its subcellular location is the cell membrane. It catalyses the reaction ATP + H2O + polyamine-[polyamine-binding protein]Side 1 = ADP + phosphate + polyamineSide 2 + [polyamine-binding protein]Side 1.. Functionally, part of the ABC transporter complex PotABCD involved in spermidine/putrescine import. Responsible for energy coupling to the transport system. In Malacoplasma penetrans (strain HF-2) (Mycoplasma penetrans), this protein is Spermidine/putrescine import ATP-binding protein PotA.